Here is a 97-residue protein sequence, read N- to C-terminus: Large ribosomal subunit protein eL21 (97 aa).

The interval 1 to 26 (MQKSEGFRSKTRYKLQKHPRQKGMAP) is disordered. Residues 9–21 (SKTRYKLQKHPRQ) show a composition bias toward basic residues.

Belongs to the eukaryotic ribosomal protein eL21 family.

The protein is Large ribosomal subunit protein eL21 of Methanococcus maripaludis (strain C5 / ATCC BAA-1333).